A 783-amino-acid chain; its full sequence is Spindle pole body protein ppc89 (783 aa).

Residue Ser-157 is modified to Phosphoserine. Disordered stretches follow at residues 180-216 (FDSP…ETPS), 434-458 (KESN…MNEA), 471-504 (ENKS…PTSG), and 528-610 (LSQS…MKGN). 3 stretches are compositionally biased toward polar residues: residues 201–216 (RSKT…ETPS), 437–453 (NVTS…SKPL), and 474–504 (SGAN…PTSG). Residues 536 to 551 (PVKHRKRRPKSKRRIT) are compositionally biased toward basic residues. Over residues 566–590 (ESDEGSEEISLDSEYSDILSDDGDF) the composition is skewed to acidic residues.

Its subcellular location is the cytoplasm. The protein localises to the cytoskeleton. It is found in the microtubule organizing center. The protein resides in the spindle pole body. Has a role in meiosis. In Schizosaccharomyces pombe (strain 972 / ATCC 24843) (Fission yeast), this protein is Spindle pole body protein ppc89 (ppc89).